We begin with the raw amino-acid sequence, 306 residues long: Aspartate carbamoyltransferase catalytic subunit (306 aa).

Carbamoyl phosphate-binding residues include Arg-55 and Thr-56. Position 84 (Lys-84) interacts with L-aspartate. Carbamoyl phosphate contacts are provided by Arg-105, His-133, and Gln-136. Residues Arg-166 and Arg-227 each contribute to the L-aspartate site. Residues Leu-265 and Pro-266 each coordinate carbamoyl phosphate.

The protein belongs to the aspartate/ornithine carbamoyltransferase superfamily. ATCase family. As to quaternary structure, heterododecamer (2C3:3R2) of six catalytic PyrB chains organized as two trimers (C3), and six regulatory PyrI chains organized as three dimers (R2).

It catalyses the reaction carbamoyl phosphate + L-aspartate = N-carbamoyl-L-aspartate + phosphate + H(+). Its pathway is pyrimidine metabolism; UMP biosynthesis via de novo pathway; (S)-dihydroorotate from bicarbonate: step 2/3. Its function is as follows. Catalyzes the condensation of carbamoyl phosphate and aspartate to form carbamoyl aspartate and inorganic phosphate, the committed step in the de novo pyrimidine nucleotide biosynthesis pathway. The polypeptide is Aspartate carbamoyltransferase catalytic subunit (Neisseria meningitidis serogroup A / serotype 4A (strain DSM 15465 / Z2491)).